Consider the following 394-residue polypeptide: MAKEVFQRTKPHMNVGTIGHVDHGKTTLTAAISIYCSKLNKDAKALKYEDIDNAPEEKARGITINARHIEYETANRHYAHVDCPGHADYIKNMITGAAQMDAAILLVAADSGAEPQTKEHLLLAQRMGIKKIIVFLNKLDLADPELVELVEVEVLELVEKYGFSADTPIIKGSAFGAMSNPEDPESTKCVKELLESMDNYFDLPERDIDKPFLLAVEDVFSISGRGTVATGRIERGIIKVGQEVEIVGIKETRKTTVTGVEMFQKILEQGQAGDNVGLLLRGVDKKDIERGQVLSAPGTITPHKKFKASIYCLTKEEGGRHKPFFPGYRPQFFFRTTDVTGVVALEGKEMVMPGDNVDIIVELISSIAMDKNVEFAVREGGRTVASGRILEILE.

A tr-type G domain is found at K10–E205. The tract at residues G19 to T26 is G1. G19–T26 provides a ligand contact to GTP. T26 contributes to the Mg(2+) binding site. The tract at residues G61–N65 is G2. The G3 stretch occupies residues D82–G85. GTP contacts are provided by residues D82–H86 and N137–D140. The G4 stretch occupies residues N137–D140. The segment at S173–F175 is G5.

The protein belongs to the TRAFAC class translation factor GTPase superfamily. Classic translation factor GTPase family. EF-Tu/EF-1A subfamily. As to quaternary structure, monomer.

The protein resides in the cytoplasm. The enzyme catalyses GTP + H2O = GDP + phosphate + H(+). In terms of biological role, GTP hydrolase that promotes the GTP-dependent binding of aminoacyl-tRNA to the A-site of ribosomes during protein biosynthesis. This is Elongation factor Tu from Borreliella burgdorferi (strain ATCC 35210 / DSM 4680 / CIP 102532 / B31) (Borrelia burgdorferi).